A 107-amino-acid polypeptide reads, in one-letter code: Snaclec VP12 subunit A (107 aa).

Cystine bridges form between C4–C15 and C32–C107. A C-type lectin domain is found at 11 to 107 (YEGNCYKAFD…ECGLAYPFIC (97 aa)).

This sequence belongs to the snaclec family. In terms of assembly, heterodimer of subunits alpha and beta; disulfide-linked. In terms of tissue distribution, expressed by the venom gland.

It localises to the secreted. Its function is as follows. Inhibits integrin alpha-2/beta-1- (ITGA2/ITGB1) dependent melanoma metastasis. This chain is Snaclec VP12 subunit A, found in Daboia palaestinae (Palestine viper).